The primary structure comprises 311 residues: Thioredoxin reductase (311 aa).

Residue 33–43 (EGFFSGISGGQ) participates in FAD binding. An intrachain disulfide couples C138 to C141. 283–292 (DVQDKYYRQA) lines the FAD pocket.

This sequence belongs to the class-II pyridine nucleotide-disulfide oxidoreductase family. As to quaternary structure, homodimer. FAD is required as a cofactor.

The protein resides in the cytoplasm. It carries out the reaction [thioredoxin]-dithiol + NADP(+) = [thioredoxin]-disulfide + NADPH + H(+). The polypeptide is Thioredoxin reductase (trxB) (Chlamydia pneumoniae (Chlamydophila pneumoniae)).